The primary structure comprises 406 residues: MSKWKDVKKVVLAYSGGLDTSIILKWLQTELGAEVVTFTADLGQGEELEPARKKAEMLGIKEIFIEDVREEFVRDFVFPMFRANAVYEGVYLLGTSIARPLISKHLIDIAKKTGADAIAHGATGKGNDQVRFELSAYALNPDIKIIAPWRDWSFKSRTQLLEFAEQHQIPVAKDKKGEAPFSVDANLLHSSSEGKVLEDPSQEAPEYVHMRTISPETAPDKATIIKIGFEKGDAVSINGERLSPATLLAKLNDYGRDNGIGRLDLVENRFVGMKSRGVYETPGGTILLAAHRAIESITLDRGAAHLKDELMPRYAELIYYGFWFSPEREMLQAAIDHSQHHVEGEVTLKLYKGNVMVIGRESAKSLYSDKLVTFEDDQGAYDQKDAAGFIKLNALRLRTLAARDRK.

ATP is bound by residues 13–21 (AYSGGLDTS) and A40. L-citrulline-binding residues include Y91 and S96. G121 contributes to the ATP binding site. T123, N127, and D128 together coordinate L-aspartate. N127 lines the L-citrulline pocket. L-citrulline is bound by residues R131, S182, S191, E267, and Y279.

It belongs to the argininosuccinate synthase family. Type 1 subfamily. In terms of assembly, homotetramer.

It is found in the cytoplasm. It carries out the reaction L-citrulline + L-aspartate + ATP = 2-(N(omega)-L-arginino)succinate + AMP + diphosphate + H(+). The protein operates within amino-acid biosynthesis; L-arginine biosynthesis; L-arginine from L-ornithine and carbamoyl phosphate: step 2/3. This Brucella suis biovar 1 (strain 1330) protein is Argininosuccinate synthase.